Reading from the N-terminus, the 903-residue chain is Protein translocase subunit SecA (903 aa).

Residues Gln85, 103–107, and Asp492 each bind ATP; that span reads GEGKT. The disordered stretch occupies residues 863–890; that stretch reads GDGVKQPVRRDKKVGRNSPCPCGSGKKY. The Zn(2+) site is built by Cys882, Cys884, Cys893, and Cys894.

It belongs to the SecA family. As to quaternary structure, monomer and homodimer. Part of the essential Sec protein translocation apparatus which comprises SecA, SecYEG and auxiliary proteins SecDF. Other proteins may also be involved. Zn(2+) is required as a cofactor.

The protein resides in the cell membrane. The protein localises to the cytoplasm. It catalyses the reaction ATP + H2O + cellular proteinSide 1 = ADP + phosphate + cellular proteinSide 2.. Part of the Sec protein translocase complex. Interacts with the SecYEG preprotein conducting channel. Has a central role in coupling the hydrolysis of ATP to the transfer of proteins into and across the cell membrane, serving as an ATP-driven molecular motor driving the stepwise translocation of polypeptide chains across the membrane. This chain is Protein translocase subunit SecA, found in Desulforudis audaxviator (strain MP104C).